The primary structure comprises 44 residues: Mu-conotoxin-like Cal 12.1.2f (44 aa).

4 disulfide bridges follow: Cys3/Cys15, Cys10/Cys27, Cys17/Cys32, and Cys26/Cys38. Trp16 is modified (6'-bromotryptophan). Pro22 is subject to 4-hydroxyproline. Trp36 and Trp37 each carry 6'-bromotryptophan. Position 39 is a 4-hydroxyproline (Pro39). Residue Trp43 is modified to 6'-bromotryptophan.

In terms of tissue distribution, expressed by the venom duct.

Its subcellular location is the secreted. Mu-conotoxins block voltage-gated sodium channels. This toxin reversibly blocks voltage-gated sodium channel in cephalopods, with no alteration in the voltage dependence of sodium conductance or on the kinetics of inactivation. This Californiconus californicus (California cone) protein is Mu-conotoxin-like Cal 12.1.2f.